Reading from the N-terminus, the 145-residue chain is Transcription antitermination protein NusB (145 aa).

Belongs to the NusB family.

In terms of biological role, involved in transcription antitermination. Required for transcription of ribosomal RNA (rRNA) genes. Binds specifically to the boxA antiterminator sequence of the ribosomal RNA (rrn) operons. The polypeptide is Transcription antitermination protein NusB (Thiobacillus denitrificans (strain ATCC 25259 / T1)).